The sequence spans 231 residues: Uridylate cyclase (231 aa).

The Guanylate cyclase domain maps to 46–178; that stretch reads TVLYADLDGS…RAANYAAKLT (133 aa). Position 49 (Tyr-49) interacts with a ribonucleoside 5'-triphosphate. Residues Asp-51 and Asp-95 each contribute to the Mn(2+) site. Arg-96 lines the a ribonucleoside 5'-triphosphate pocket.

The protein belongs to the adenylyl cyclase class-4/guanylyl cyclase family. Pyrimidine cyclase subfamily. As to quaternary structure, homodimer. Mn(2+) is required as a cofactor.

It localises to the cytoplasm. It catalyses the reaction UTP = 3',5'-cyclic UMP + diphosphate. In terms of biological role, pycsar (pyrimidine cyclase system for antiphage resistance) provides immunity against bacteriophage. The pyrimidine cyclase (PycC) synthesizes cyclic nucleotides in response to infection; these serve as specific second messenger signals. The signal activates the adjacent effector, leading to bacterial cell death and abortive phage infection. A clade B Pycsar system. Functionally, the pyrimidine cyclase gene of a two-gene Pycsar system, generates cyclic UMP (cUMP) from UTP probably in response to bacteriophage infection. Expression of this and adjacent effector XpPycTIR (AC P0DV29) confers resistance to bacteriophage T7. When cells expressing the Pycsar system are infected phage T7 at low multiplicity of infection (0.2 MOI) the culture survives, at 2.0 MOI bacteria enter growth arrest. The same cells enter growth arrest after exposure to 2.5 mM cUMP but not cCMP; the effector protein responds only to the cUMP produced by its cognate NTP cyclase. This Xanthomonas perforans protein is Uridylate cyclase.